The sequence spans 282 residues: Large ribosomal subunit protein uL2 (282 aa).

The tract at residues 223–282 (TVRGSVMNPNDHPHGGGEGRAPIGRKSPVTPWGKKALGVKTRNTKKTSEKLIVRKRSNKK) is disordered.

Belongs to the universal ribosomal protein uL2 family. As to quaternary structure, part of the 50S ribosomal subunit. Forms a bridge to the 30S subunit in the 70S ribosome.

Functionally, one of the primary rRNA binding proteins. Required for association of the 30S and 50S subunits to form the 70S ribosome, for tRNA binding and peptide bond formation. It has been suggested to have peptidyltransferase activity; this is somewhat controversial. Makes several contacts with the 16S rRNA in the 70S ribosome. The polypeptide is Large ribosomal subunit protein uL2 (Mycoplasma mycoides subsp. mycoides SC (strain CCUG 32753 / NCTC 10114 / PG1)).